Consider the following 741-residue polypeptide: Phosphoribosylformylglycinamidine synthase subunit PurL (741 aa).

The active site involves His54. ATP-binding residues include Tyr57 and Lys96. Residue Glu98 coordinates Mg(2+). Substrate is bound by residues 99-102 (SHNH) and Arg121. The Proton acceptor role is filled by His100. Mg(2+) is bound at residue Asp122. Gln245 lines the substrate pocket. Asp273 provides a ligand contact to Mg(2+). Residue 317–319 (ESQ) participates in substrate binding. Positions 500 and 537 each coordinate ATP. Asn538 is a Mg(2+) binding site. Ser540 contributes to the substrate binding site.

Belongs to the FGAMS family. Monomer. Part of the FGAM synthase complex composed of 1 PurL, 1 PurQ and 2 PurS subunits.

The protein localises to the cytoplasm. It carries out the reaction N(2)-formyl-N(1)-(5-phospho-beta-D-ribosyl)glycinamide + L-glutamine + ATP + H2O = 2-formamido-N(1)-(5-O-phospho-beta-D-ribosyl)acetamidine + L-glutamate + ADP + phosphate + H(+). It functions in the pathway purine metabolism; IMP biosynthesis via de novo pathway; 5-amino-1-(5-phospho-D-ribosyl)imidazole from N(2)-formyl-N(1)-(5-phospho-D-ribosyl)glycinamide: step 1/2. Part of the phosphoribosylformylglycinamidine synthase complex involved in the purines biosynthetic pathway. Catalyzes the ATP-dependent conversion of formylglycinamide ribonucleotide (FGAR) and glutamine to yield formylglycinamidine ribonucleotide (FGAM) and glutamate. The FGAM synthase complex is composed of three subunits. PurQ produces an ammonia molecule by converting glutamine to glutamate. PurL transfers the ammonia molecule to FGAR to form FGAM in an ATP-dependent manner. PurS interacts with PurQ and PurL and is thought to assist in the transfer of the ammonia molecule from PurQ to PurL. This is Phosphoribosylformylglycinamidine synthase subunit PurL from Shouchella clausii (strain KSM-K16) (Alkalihalobacillus clausii).